A 104-amino-acid polypeptide reads, in one-letter code: Putative arsenate reductase (104 aa).

The active site involves C12.

Belongs to the ArsC family.

The enzyme catalyses [glutaredoxin]-dithiol + arsenate + glutathione + H(+) = glutathionyl-S-S-[glutaredoxin] + arsenite + H2O. Functionally, reduction of arsenate [As(V)] to arsenite [As(III)]. This protein expands the substrate specificity of ArsAB pump which can extrude arsenite and antimonite to allow for arsenate pumping and resistance. The polypeptide is Putative arsenate reductase (yfjU) (Escherichia coli (strain K12)).